We begin with the raw amino-acid sequence, 473 residues long: Ribulose bisphosphate carboxylase large chain (473 aa).

Substrate-binding residues include Asn-116 and Thr-166. Catalysis depends on Lys-168, which acts as the Proton acceptor. Lys-170 is a binding site for substrate. 3 residues coordinate Mg(2+): Lys-194, Asp-196, and Glu-197. At Lys-194 the chain carries N6-carboxylysine. His-287 (proton acceptor) is an active-site residue. Substrate-binding residues include Arg-288, His-320, and Ser-372.

This sequence belongs to the RuBisCO large chain family. Type I subfamily. In terms of assembly, heterohexadecamer of 8 large chains and 8 small chains. Mg(2+) serves as cofactor.

It catalyses the reaction 2 (2R)-3-phosphoglycerate + 2 H(+) = D-ribulose 1,5-bisphosphate + CO2 + H2O. The catalysed reaction is D-ribulose 1,5-bisphosphate + O2 = 2-phosphoglycolate + (2R)-3-phosphoglycerate + 2 H(+). In terms of biological role, ruBisCO catalyzes two reactions: the carboxylation of D-ribulose 1,5-bisphosphate, the primary event in carbon dioxide fixation, as well as the oxidative fragmentation of the pentose substrate. Both reactions occur simultaneously and in competition at the same active site. This chain is Ribulose bisphosphate carboxylase large chain, found in Methylococcus capsulatus (strain ATCC 33009 / NCIMB 11132 / Bath).